Reading from the N-terminus, the 289-residue chain is Serine/threonine-protein phosphatase PGAM5, mitochondrial (289 aa).

The Mitochondrial matrix portion of the chain corresponds to 1–6 (MAFRQA). Residues 7–29 (LQLAACGLAGGSAAVLFSAVAVG) form a helical membrane-spanning segment. At 30 to 289 (KPRAGGDAEP…FMPPDKITRS (260 aa)) the chain is on the mitochondrial intermembrane side. Residues 32-59 (RAGGDAEPRPAEPPAWAGGARPGPGVWD) form a disordered region. Residues 45-56 (PAWAGGARPGPG) show a composition bias toward low complexity. The interval 77–82 (NVESGE) is interaction with KEAP1. A phosphoserine mark is found at Ser-80 and Ser-87. 3 positions are modified to N6-acetyllysine: Lys-116, Lys-144, and Lys-191.

This sequence belongs to the phosphoglycerate mutase family. BPG-dependent PGAM subfamily. In terms of assembly, dimer. Forms a ternary complex with NFE2L2 and KEAP1. Interacts with BCL2L1 and MAP3K5. Upon TNF-induced necrosis, forms in complex with RIPK1, RIPK3 and MLKL; the formation of this complex leads to PGAM5 phosphorylation. Isoform 2, but not isoform 1, interacts with DNM1L; this interaction leads to DNM1L dephosphorylation and activation and eventually to mitochondria fragmentation. Both isoform 1 and isoform 2 are phosphorylated by the RIPK1/RIPK3 complex under necrotic conditions. This phosphorylation increases PGAM5 phosphatase activity. Post-translationally, proteolytically cleaved by PARL in response to loss of mitochondrial membrane potential.

It is found in the mitochondrion outer membrane. The protein resides in the mitochondrion inner membrane. The enzyme catalyses O-phospho-L-seryl-[protein] + H2O = L-seryl-[protein] + phosphate. It carries out the reaction O-phospho-L-threonyl-[protein] + H2O = L-threonyl-[protein] + phosphate. Its function is as follows. Mitochondrial serine/threonine phosphatase that dephosphorylates various substrates and thus plays a role in different biological processes including cellular senescence or mitophagy. Modulates cellular senescence by regulating mitochondrial dynamics. Mechanistically, participates in mitochondrial fission through dephosphorylating DNM1L/DRP1. Additionally, dephosphorylates MFN2 in a stress-sensitive manner and consequently protects it from ubiquitination and degradation to promote mitochondrial network formation. Regulates mitophagy independent of PARKIN by interacting with and dephosphorylating FUNDC1, which interacts with LC3. Regulates anti-oxidative response by forming a tertiary complex with KEAP1 and NRF2. Regulates necroptosis by acting as a RIPK3 target and recruiting the RIPK1-RIPK3-MLKL necrosis 'attack' complex to mitochondria. The sequence is that of Serine/threonine-protein phosphatase PGAM5, mitochondrial (PGAM5) from Homo sapiens (Human).